We begin with the raw amino-acid sequence, 265 residues long: Basic leucine zipper 6 (265 aa).

Disordered regions lie at residues 1–24 (MAQL…SAGG) and 77–139 (LMSM…RDPK). Low complexity predominate over residues 85-97 (GGSSAPGSDNGGS). The segment covering 122-132 (TQEQAAATSPT) has biased composition (polar residues). In terms of domain architecture, bZIP spans 137–189 (DPKRVKRILANRQSAQRSRVRKLQYISELERSVTTLQNEVSVLSPRVAFLDQQ). The basic motif stretch occupies residues 139–158 (KRVKRILANRQSAQRSRVRK). A leucine-zipper region spans residues 165 to 186 (LERSVTTLQNEVSVLSPRVAFL). Positions 239–265 (LSGGLAADHAHVHGGPPPVRAEKELMS) are disordered.

Expressed in roots, shoots and panicles.

The protein resides in the nucleus. In terms of biological role, transcription regulator. In Oryza sativa subsp. japonica (Rice), this protein is Basic leucine zipper 6 (BZIP06).